Here is a 273-residue protein sequence, read N- to C-terminus: Glutamate racemase (273 aa).

Substrate is bound by residues 11–12 and 43–44; these read DS and YG. Cys74 serves as the catalytic Proton donor/acceptor. Residue 75–76 coordinates substrate; that stretch reads NT. Residue Cys185 is the Proton donor/acceptor of the active site. Residue 186-187 coordinates substrate; that stretch reads TH.

It belongs to the aspartate/glutamate racemases family.

The enzyme catalyses L-glutamate = D-glutamate. It functions in the pathway cell wall biogenesis; peptidoglycan biosynthesis. In terms of biological role, provides the (R)-glutamate required for cell wall biosynthesis. This chain is Glutamate racemase, found in Lactiplantibacillus plantarum (strain ATCC BAA-793 / NCIMB 8826 / WCFS1) (Lactobacillus plantarum).